Consider the following 845-residue polypeptide: Beta-glucosidase B (845 aa).

Residue N202 is glycosylated (N-linked (GlcNAc...) asparagine). Residue D230 is part of the active site. Residue N235 is glycosylated (N-linked (GlcNAc...) asparagine). The region spanning 406-557 (EGQPGWTLDF…HNRDLLSEAV (152 aa)) is the PA14 domain. 3 N-linked (GlcNAc...) asparagine glycosylation sites follow: N591, N612, and N794.

This sequence belongs to the glycosyl hydrolase 3 family.

The enzyme catalyses Hydrolysis of terminal, non-reducing beta-D-glucosyl residues with release of beta-D-glucose.. It participates in glycan metabolism; cellulose degradation. Functionally, beta-glucosidases are one of a number of cellulolytic enzymes involved in the degradation of cellulosic biomass. Catalyzes the last step releasing glucose from the inhibitory cellobiose. The chain is Beta-glucosidase B (bglB) from Emericella nidulans (strain FGSC A4 / ATCC 38163 / CBS 112.46 / NRRL 194 / M139) (Aspergillus nidulans).